A 331-amino-acid chain; its full sequence is 4-hydroxythreonine-4-phosphate dehydrogenase (331 aa).

Positions 136 and 137 each coordinate substrate. The a divalent metal cation site is built by H166, H211, and H266. Substrate is bound by residues K274, N283, and R292.

This sequence belongs to the PdxA family. In terms of assembly, homodimer. The cofactor is Zn(2+). Requires Mg(2+) as cofactor. Co(2+) is required as a cofactor.

It is found in the cytoplasm. The catalysed reaction is 4-(phosphooxy)-L-threonine + NAD(+) = 3-amino-2-oxopropyl phosphate + CO2 + NADH. It participates in cofactor biosynthesis; pyridoxine 5'-phosphate biosynthesis; pyridoxine 5'-phosphate from D-erythrose 4-phosphate: step 4/5. Functionally, catalyzes the NAD(P)-dependent oxidation of 4-(phosphooxy)-L-threonine (HTP) into 2-amino-3-oxo-4-(phosphooxy)butyric acid which spontaneously decarboxylates to form 3-amino-2-oxopropyl phosphate (AHAP). In Thioalkalivibrio sulfidiphilus (strain HL-EbGR7), this protein is 4-hydroxythreonine-4-phosphate dehydrogenase.